The sequence spans 254 residues: DNA-3-methyladenine glycosylase (254 aa).

A compositionally biased stretch (basic residues) spans 1–10; it reads MKTPARRSKR. Residues 1 to 20 form a disordered region; that stretch reads MKTPARRSKRVNQEESETNV.

It belongs to the DNA glycosylase MPG family.

It localises to the nucleus. The catalysed reaction is Hydrolysis of alkylated DNA, releasing 3-methyladenine, 3-methylguanine, 7-methylguanine and 7-methyladenine.. Functionally, hydrolysis of the deoxyribose N-glycosidic bond to excise 3-methyladenine, and 7-methylguanine from the damaged DNA polymer formed by alkylation lesions. The sequence is that of DNA-3-methyladenine glycosylase (MAG) from Arabidopsis thaliana (Mouse-ear cress).